A 468-amino-acid chain; its full sequence is MSKPTTLYDKIWNDHLVHEADDGTCLLYIDRHLVHEVTSPQAFEGLRATGRKVHAPEKTLAVVDHNVPTTDRTKPNPDPESIEQIKALADNAREFGIEYYNEFDKRQGIVHVIGPEQGFTLPGTTIVCGDSHTSTHGAFGALAHGIGTSEVEHVLATQTLIQKKAKNMRVTVDGKLPDGVTGKDIILAIIGEIGTAGGTGYVLEYAGEAIRALSMEGRMTVCNMSIEGGARAGLVAPDQKAYDFLRDRPKAPKGAAWDAAMRYWEKLRSDDGAHFDHELRLDAAKLPPIVTWGTSPEDVISVTGIVPDPDKIADEAKRLSKHRALKYMGLTAGTKITDIKLDRVFIGSCTNGRIEDLRAAAKIAEGKQVSASVNAMVVPGSGIVKEQAEAEGLDKIFIKAGFEWREPGCSMCLAMNPDKLKPEERCASTSNRNFEGRQGFKGRTHLVSPAMAAAAAIAGHFVDVREWR.

[4Fe-4S] cluster is bound by residues Cys-349, Cys-409, and Cys-412.

It belongs to the aconitase/IPM isomerase family. LeuC type 1 subfamily. Heterodimer of LeuC and LeuD. It depends on [4Fe-4S] cluster as a cofactor.

The catalysed reaction is (2R,3S)-3-isopropylmalate = (2S)-2-isopropylmalate. It participates in amino-acid biosynthesis; L-leucine biosynthesis; L-leucine from 3-methyl-2-oxobutanoate: step 2/4. Catalyzes the isomerization between 2-isopropylmalate and 3-isopropylmalate, via the formation of 2-isopropylmaleate. This is 3-isopropylmalate dehydratase large subunit 2 from Bradyrhizobium diazoefficiens (strain JCM 10833 / BCRC 13528 / IAM 13628 / NBRC 14792 / USDA 110).